The sequence spans 270 residues: Putative carboxymethylenebutenolidase (270 aa).

Catalysis depends on residues Cys147, Asp204, and His236.

It belongs to the dienelactone hydrolase family.

It carries out the reaction 2-(5-oxo-2,5-dihydrofuran-2-ylidene)acetate + H2O = 4-oxohex-2-enedioate + H(+). This Salmonella typhi protein is Putative carboxymethylenebutenolidase (ysgA).